The primary structure comprises 213 residues: Large ribosomal subunit protein uL3 (213 aa).

The disordered stretch occupies residues 130–161 (KRGNMTHGSKNHRLPGSTGAGTTPGRVYPGKR).

Belongs to the universal ribosomal protein uL3 family. As to quaternary structure, part of the 50S ribosomal subunit. Forms a cluster with proteins L14 and L19.

Functionally, one of the primary rRNA binding proteins, it binds directly near the 3'-end of the 23S rRNA, where it nucleates assembly of the 50S subunit. This is Large ribosomal subunit protein uL3 from Picosynechococcus sp. (strain ATCC 27264 / PCC 7002 / PR-6) (Agmenellum quadruplicatum).